The following is a 548-amino-acid chain: Folylpolyglutamate synthase (548 aa).

Position 130–133 (130–133 (GKGS)) interacts with ATP. Residues serine 157, glutamate 234, and histidine 262 each contribute to the Mg(2+) site. The ATP site is built by arginine 382 and aspartate 396.

It belongs to the folylpolyglutamate synthase family. A monovalent cation serves as cofactor.

It is found in the mitochondrion inner membrane. It localises to the mitochondrion matrix. The protein resides in the cytoplasm. It carries out the reaction (6S)-5,6,7,8-tetrahydrofolyl-(gamma-L-Glu)(n) + L-glutamate + ATP = (6S)-5,6,7,8-tetrahydrofolyl-(gamma-L-Glu)(n+1) + ADP + phosphate + H(+). It functions in the pathway cofactor biosynthesis; tetrahydrofolylpolyglutamate biosynthesis. Functionally, catalyzes conversion of folates to polyglutamate derivatives allowing concentration of folate compounds in the cell and the intracellular retention of these cofactors, which are important substrates for most of the folate-dependent enzymes that are involved in one-carbon transfer reactions involved in purine, pyrimidine and amino acid synthesis. Required for methionine synthesis and maintenance of intact mitochondrial DNA. Involved in telomere maintenance. The polypeptide is Folylpolyglutamate synthase (Saccharomyces cerevisiae (strain AWRI796) (Baker's yeast)).